The following is a 433-amino-acid chain: Glutamate-1-semialdehyde 2,1-aminomutase (433 aa).

An N6-(pyridoxal phosphate)lysine modification is found at Lys-273.

It belongs to the class-III pyridoxal-phosphate-dependent aminotransferase family. HemL subfamily. Homodimer. Pyridoxal 5'-phosphate is required as a cofactor.

The protein resides in the cytoplasm. The catalysed reaction is (S)-4-amino-5-oxopentanoate = 5-aminolevulinate. The protein operates within porphyrin-containing compound metabolism; protoporphyrin-IX biosynthesis; 5-aminolevulinate from L-glutamyl-tRNA(Glu): step 2/2. It functions in the pathway porphyrin-containing compound metabolism; chlorophyll biosynthesis. The chain is Glutamate-1-semialdehyde 2,1-aminomutase from Crocosphaera subtropica (strain ATCC 51142 / BH68) (Cyanothece sp. (strain ATCC 51142)).